A 545-amino-acid polypeptide reads, in one-letter code: CTP synthase (545 aa).

Positions 1-266 (MTTNYIFVTG…DDYICKRFSL (266 aa)) are amidoligase domain. Ser14 is a CTP binding site. Ser14 provides a ligand contact to UTP. ATP is bound by residues 15 to 20 (SLGKGI) and Asp72. Asp72 and Glu140 together coordinate Mg(2+). CTP-binding positions include 147–149 (DIE), 187–192 (KTKPTQ), and Lys223. UTP contacts are provided by residues 187-192 (KTKPTQ) and Lys223. Residue 239–241 (KDV) participates in ATP binding. The 252-residue stretch at 291 to 542 (TIGMVGKYIE…VKAASEYQKR (252 aa)) folds into the Glutamine amidotransferase type-1 domain. Gly352 is an L-glutamine binding site. Catalysis depends on Cys379, which acts as the Nucleophile; for glutamine hydrolysis. Residues 380–383 (LGMQ), Glu403, and Arg470 contribute to the L-glutamine site. Active-site residues include His515 and Glu517.

Belongs to the CTP synthase family. Homotetramer.

It carries out the reaction UTP + L-glutamine + ATP + H2O = CTP + L-glutamate + ADP + phosphate + 2 H(+). The enzyme catalyses L-glutamine + H2O = L-glutamate + NH4(+). The catalysed reaction is UTP + NH4(+) + ATP = CTP + ADP + phosphate + 2 H(+). It participates in pyrimidine metabolism; CTP biosynthesis via de novo pathway; CTP from UDP: step 2/2. Allosterically activated by GTP, when glutamine is the substrate; GTP has no effect on the reaction when ammonia is the substrate. The allosteric effector GTP functions by stabilizing the protein conformation that binds the tetrahedral intermediate(s) formed during glutamine hydrolysis. Inhibited by the product CTP, via allosteric rather than competitive inhibition. In terms of biological role, catalyzes the ATP-dependent amination of UTP to CTP with either L-glutamine or ammonia as the source of nitrogen. Regulates intracellular CTP levels through interactions with the four ribonucleotide triphosphates. This is CTP synthase from Citrobacter koseri (strain ATCC BAA-895 / CDC 4225-83 / SGSC4696).